We begin with the raw amino-acid sequence, 397 residues long: Acetate kinase (397 aa).

Asparagine 8 is a Mg(2+) binding site. Residue lysine 15 coordinates ATP. Residue arginine 89 coordinates substrate. Aspartate 146 serves as the catalytic Proton donor/acceptor. Residues 206–210, 281–283, and 328–332 contribute to the ATP site; these read HIGNG, DLR, and GVGEN. Glutamate 381 provides a ligand contact to Mg(2+).

The protein belongs to the acetokinase family. As to quaternary structure, homodimer. Requires Mg(2+) as cofactor. Mn(2+) serves as cofactor.

The protein localises to the cytoplasm. The catalysed reaction is acetate + ATP = acetyl phosphate + ADP. It participates in metabolic intermediate biosynthesis; acetyl-CoA biosynthesis; acetyl-CoA from acetate: step 1/2. Catalyzes the formation of acetyl phosphate from acetate and ATP. Can also catalyze the reverse reaction. This chain is Acetate kinase, found in Oceanobacillus iheyensis (strain DSM 14371 / CIP 107618 / JCM 11309 / KCTC 3954 / HTE831).